The following is an 825-amino-acid chain: Leucine-rich repeat and guanylate kinase domain-containing protein (825 aa).

Positions 73–96 are disordered; the sequence is DSDGDEDQGEGEAGSEESSESEML. 9 LRR repeats span residues 129–149, 150–171, 172–193, 194–215, 216–237, 238–259, 260–280, 281–302, and 303–324; these read YLNL…CGYV, HLQK…SCMP, YLLE…KPPK, NLKK…SAYH, ALTK…EMCN, NLIH…NKLP, IKIL…EDLK, ALQN…ENHD, and LLEV…EYIK. Residues 337 to 375 enclose the LRRCT domain; it reads NPIQEKSEYWFFVIFMLLRLTELDQKKIKVEEKVSAVNK. Residues 414 to 597 enclose the Guanylate kinase-like domain; it reads YPMLILAGPE…AYQKLSQLIR (184 aa). An ATP-binding site is contributed by 421-428; it reads GPEACGKR. The segment at 760-825 is disordered; that stretch reads PEGSISSHLG…TLPPIPQGRR (66 aa). A compositionally biased stretch (polar residues) spans 763 to 774; the sequence is SISSHLGSGASD. Pro residues predominate over residues 816-825; it reads TLPPIPQGRR.

As to quaternary structure, interacts (via guanylate kinase-like domain) with RIMBP3 (via coiled-coil region). Interacts (via guanylate kinase-like domain) with HOOK2. Interacts (via LRRCT domain) with KLC3. Interacts with HOOK1 and HOOK3.

The protein resides in the cytoplasmic vesicle. It localises to the secretory vesicle. Its subcellular location is the acrosome. It is found in the cytoplasm. The protein localises to the cytoskeleton. The protein resides in the cilium basal body. Involved in multiple aspects of sperm assembly including acrosome attachment, shaping of the sperm head and in the early aspects of axoneme development. Not essential for primary cilium biogenesis. The protein is Leucine-rich repeat and guanylate kinase domain-containing protein (LRGUK) of Homo sapiens (Human).